The primary structure comprises 60 residues: Metallothionein B (60 aa).

Residues 1-28 (MDPCECSKSGTCNCGGSCTCTNCSCTSC) form a beta region. Residues cysteine 4, cysteine 6, cysteine 12, cysteine 14, cysteine 18, cysteine 20, cysteine 23, cysteine 25, cysteine 28, cysteine 32, cysteine 33, cysteine 35, cysteine 36, cysteine 40, cysteine 43, cysteine 47, cysteine 49, cysteine 54, cysteine 58, and cysteine 59 each coordinate a divalent metal cation. The segment at 29–60 (KKSCCPCCPSGCTKCASGCVCKGKTCDTSCCQ) is alpha.

It belongs to the metallothionein superfamily. Type 1 family.

Its function is as follows. Metallothioneins have a high content of cysteine residues that bind various heavy metals. This Trematomus bernacchii (Emerald rockcod) protein is Metallothionein B (mtb).